The sequence spans 139 residues: ATP synthase epsilon chain (139 aa).

Belongs to the ATPase epsilon chain family. F-type ATPases have 2 components, CF(1) - the catalytic core - and CF(0) - the membrane proton channel. CF(1) has five subunits: alpha(3), beta(3), gamma(1), delta(1), epsilon(1). CF(0) has three main subunits: a, b and c.

It is found in the cell inner membrane. Produces ATP from ADP in the presence of a proton gradient across the membrane. The sequence is that of ATP synthase epsilon chain from Marinomonas sp. (strain MWYL1).